A 301-amino-acid polypeptide reads, in one-letter code: Peptidyl-prolyl cis-trans isomerase E (301 aa).

Residues 5–83 enclose the RRM domain; sequence KRVLYVGGLA…GRTIRVNLAK (79 aa). A phosphoserine mark is found at Ser91, Ser97, and Ser119. Positions 107–140 are disordered; sequence GKTLEENKEEEGSEPPKAETQEGEPAAKKARSNP. Positions 143–299 constitute a PPIase cyclophilin-type domain; that stretch reads YMDIKIGNKP…QKVIIADCGE (157 aa).

This sequence belongs to the cyclophilin-type PPIase family. PPIase E subfamily. As to quaternary structure, identified in the spliceosome C complex. Component of the XAB2 complex, a multimeric protein complex composed of XAB2, PRPF19, AQR, ZNF830, ISY1, and PPIE. Identified in a pentameric intron-binding (IB) complex composed of AQR, XAB2, ISY1, ZNF830 and PPIE that is incorporated into the spliceosome as a preassembled complex. The IB complex does not contain PRPF19. Interacts (via RNA-binding domain) with KMT2A (via the third PHD-type zinc-finger).

It localises to the nucleus. The catalysed reaction is [protein]-peptidylproline (omega=180) = [protein]-peptidylproline (omega=0). Involved in pre-mRNA splicing as component of the spliceosome. Combines RNA-binding and PPIase activities. Binds mRNA and has a preference for single-stranded RNA molecules with poly-A and poly-U stretches, suggesting it binds to the poly(A)-region in the 3'-UTR of mRNA molecules. Catalyzes the cis-trans isomerization of proline imidic peptide bonds in proteins. Inhibits KMT2A activity; this requires proline isomerase activity. The polypeptide is Peptidyl-prolyl cis-trans isomerase E (PPIE) (Pongo abelii (Sumatran orangutan)).